The sequence spans 516 residues: Probable cyclic di-GMP phosphodiesterase PdeB (516 aa).

The next 2 membrane-spanning stretches (helical) occupy residues 6-26 and 242-262; these read LVGLISGVLILSVLLPVGLSI and QVFIWLPLGLVIGLLAAMFVL. Residues 268–516 enclose the EAL domain; that stretch reads IQSPHHRLQD…DFLRWAEQHL (249 aa).

The protein localises to the cell inner membrane. The enzyme catalyses 3',3'-c-di-GMP + H2O = 5'-phosphoguanylyl(3'-&gt;5')guanosine + H(+). Phosphodiesterase (PDE) that catalyzes the hydrolysis of cyclic-di-GMP (c-di-GMP) to 5'-pGpG. This chain is Probable cyclic di-GMP phosphodiesterase PdeB, found in Escherichia coli (strain K12).